Reading from the N-terminus, the 868-residue chain is LPS-assembly protein LptD (868 aa).

Positions 1-24 (MLKGIHKYLLMCFGTVLFTVQANA) are cleaved as a signal peptide.

This sequence belongs to the LptD family. Component of the lipopolysaccharide transport and assembly complex. Interacts with LptE and LptA.

Its subcellular location is the cell outer membrane. In terms of biological role, together with LptE, is involved in the assembly of lipopolysaccharide (LPS) at the surface of the outer membrane. The protein is LPS-assembly protein LptD of Francisella tularensis subsp. holarctica (strain LVS).